Here is a 361-residue protein sequence, read N- to C-terminus: NudC domain-containing protein 3 (361 aa).

A compositionally biased stretch (basic and acidic residues) spans 87–97; the sequence is KIRRKEEEEAK. The segment at 87 to 106 is disordered; that stretch reads KIRRKEEEEAKTVSAAAAEK. The residue at position 146 (S146) is a Phosphoserine. The CS domain maps to 185–277; the sequence is AVRENYTWSQ…VGEYWWNAIL (93 aa). Phosphoserine is present on residues S340 and S355.

The sequence is that of NudC domain-containing protein 3 (NUDCD3) from Pongo abelii (Sumatran orangutan).